The primary structure comprises 486 residues: Adenosylhomocysteinase (486 aa).

Residues Thr63, Asp147, and Glu209 each contribute to the substrate site. 210–212 lines the NAD(+) pocket; sequence TTT. Residues Lys239 and Asp243 each contribute to the substrate site. NAD(+)-binding positions include Asn244, 273–278, Glu296, Asn331, 352–354, and Asn400; these read GYGDVG and IGH.

The protein belongs to the adenosylhomocysteinase family. It depends on NAD(+) as a cofactor.

It catalyses the reaction S-adenosyl-L-homocysteine + H2O = L-homocysteine + adenosine. It participates in amino-acid biosynthesis; L-homocysteine biosynthesis; L-homocysteine from S-adenosyl-L-homocysteine: step 1/1. Adenosylhomocysteine is a competitive inhibitor of S-adenosyl-L-methionine-dependent methyl transferase reactions; therefore adenosylhomocysteinase may play a key role in the control of methylations via regulation of the intracellular concentration of adenosylhomocysteine. The chain is Adenosylhomocysteinase from Trichomonas vaginalis.